The sequence spans 1027 residues: MDTFNVPMLAESSNTNYATEATSNHHHLQHQHQQQHSHQQQQQQQLLMPHHHKDQMLAAGSSPMLPFYSHLQLQQKDATATIGPAAAAAAVEAATTSANADNFSSLQTIDASQLDGGISLSGLCDRFFVASPNPHSNSNMTLMGTATAATTTTTNNNNNNNTNNNNNNNVEAKTVRPSNGNSVIIESVTMPSFANILFPTHRSANECIDPALLQKNPQNPNGNNSSIIVPPVEYHQLKPLEVNSSTSVSTSNFLSSTTAQLLDFEVQVGKDDGHISTTTTTGPGSGSASGSGSGSGSGSGSIARTIGTATPTTTTSMSNTANPTRSSLHSIEELAASSCAPRAASPNSNHTSSASTTPQQQQQQQHHMQSGNHSGSNLSSDDESMSEDEFGLEIDDNGGYQDTTSSHSQQSGGGGGGGGGNLLNGSSGGSSAGGGYMLLPQAASSSGNNGNPNAGHMSSGSVGNGSGGAGNGGAGGNSGPGNPMGGTSATPGHGGEVIDFKHLFEELCPVCGDKVSGYHYGLLTCESCKGFFKRTVQNKKVYTCVAERSCHIDKTQRKRCPYCRFQKCLEVGMKLEAVRADRMRGGRNKFGPMYKRDRARKLQVMRQRQLALQALRNSMGPDIKPTPISPGYQQAYPNMNIKQEIQIPQVSSLTQSPDSSPSPIAIALGQVNASTGGVIATPMNAGTGGSGGGGLNGPSSVGNGNSSNGSSNGNNNSSTGNGTSGGGGGNNAGGGGGGTNSNDGLHRNGGNGNSSCHEAGIGSLQNTADSKLCFDSGTHPSSTADALIEPLRVSPMIREFVQSIDDREWQTQLFALLQKQTYNQVEVDLFELMCKVLDQNLFSQVDWARNTVFFKDLKVDDQMKLLQHSWSDMLVLDHLHHRIHNGLPDETQLNNGQVFNLMSLGLLGVPQLGDYFNELQNKLQDLKFDMGDYVCMKFLILLNPSVRGIVNRKTVSEGHDNVQAALLDYTLTCYPSVNDKFRGLVNILPEIHAMAVRGEDHLYTKHCAGSAPTQTLLMEMLHAKRKG.

Disordered regions lie at residues 20 to 48 (EATSNHHHLQHQHQQQHSHQQQQQQQLLM), 273 to 427 (GHIS…NGSS), and 443 to 493 (ASSS…TPGH). The span at 24–35 (NHHHLQHQHQQQ) shows a compositional bias: basic residues. Residues 36–48 (HSHQQQQQQQLLM) show a composition bias toward low complexity. The segment covering 283-299 (PGSGSASGSGSGSGSGS) has biased composition (gly residues). Composition is skewed to low complexity over residues 300–324 (GSIARTIGTATPTTTTSMSNTANPT) and 335–349 (AASSCAPRAASPNSN). The segment covering 380 to 396 (SDDESMSEDEFGLEIDD) has biased composition (acidic residues). Residues 411 to 427 (SGGGGGGGGGNLLNGSS) are compositionally biased toward gly residues. A compositionally biased stretch (low complexity) spans 443 to 461 (ASSSGNNGNPNAGHMSSGS). Over residues 462 to 484 (VGNGSGGAGNGGAGGNSGPGNPM) the composition is skewed to gly residues. Positions 505-580 (EELCPVCGDK…VGMKLEAVRA (76 aa)) form a DNA-binding region, nuclear receptor. 2 consecutive NR C4-type zinc fingers follow at residues 508-528 (CPVCGDKVSGYHYGLLTCESC) and 544-568 (CVAERSCHIDKTQRKRCPYCRFQKC). Residues 682–756 (PMNAGTGGSG…RNGGNGNSSC (75 aa)) are disordered. The span at 686–696 (GTGGSGGGGLN) shows a compositional bias: gly residues. Over residues 697 to 721 (GPSSVGNGNSSNGSSNGNNNSSTGN) the composition is skewed to low complexity. A compositionally biased stretch (gly residues) spans 722–739 (GTSGGGGGNNAGGGGGGT). The region spanning 792 to 1024 (RVSPMIREFV…TLLMEMLHAK (233 aa)) is the NR LBD domain.

The protein belongs to the nuclear hormone receptor family. NR5 subfamily. As to quaternary structure, monomer; forms a complex with ftz. As to expression, expression in the parasegmental primordia of the embryonic blastoderm.

It is found in the nucleus. Functionally, acts as a cofactor to fushi tarazu (ftz). Facilitates the binding of ftz to DNA. Binds the sequence element 5'-YCYYGGYCR-3' in the zebra element of ftz. Probably functions as a nuclear receptor for a yet unknown ligand. In contrast to vertebrate homologs, not activated by phospholipids. The protein is Nuclear hormone receptor FTZ-F1 (ftz-f1) of Drosophila melanogaster (Fruit fly).